A 664-amino-acid chain; its full sequence is UvrABC system protein B (664 aa).

The 158-residue stretch at 25 to 182 (KSFGEGKNKI…RKFLHIQYAR (158 aa)) folds into the Helicase ATP-binding domain. Residue 38–45 (GVTGSGKT) coordinates ATP. The Beta-hairpin motif lies at 91–114 (YYDYYQPEAYVPSSDTFIEKDMSM). The 167-residue stretch at 429–595 (QIEDLLNEIR…TIQKEIHDIL (167 aa)) folds into the Helicase C-terminal domain. In terms of domain architecture, UVR spans 625 to 660 (DKLREALKREMLRYANDMDFEKAAMFRDKMLALGPD).

This sequence belongs to the UvrB family. As to quaternary structure, forms a heterotetramer with UvrA during the search for lesions. Interacts with UvrC in an incision complex.

Its subcellular location is the cytoplasm. Functionally, the UvrABC repair system catalyzes the recognition and processing of DNA lesions. A damage recognition complex composed of 2 UvrA and 2 UvrB subunits scans DNA for abnormalities. Upon binding of the UvrA(2)B(2) complex to a putative damaged site, the DNA wraps around one UvrB monomer. DNA wrap is dependent on ATP binding by UvrB and probably causes local melting of the DNA helix, facilitating insertion of UvrB beta-hairpin between the DNA strands. Then UvrB probes one DNA strand for the presence of a lesion. If a lesion is found the UvrA subunits dissociate and the UvrB-DNA preincision complex is formed. This complex is subsequently bound by UvrC and the second UvrB is released. If no lesion is found, the DNA wraps around the other UvrB subunit that will check the other stand for damage. This chain is UvrABC system protein B, found in Leptospira biflexa serovar Patoc (strain Patoc 1 / Ames).